The following is a 288-amino-acid chain: Quinate/shikimate dehydrogenase (288 aa).

Substrate contacts are provided by Lys-71 and Asp-107. Residues 132–135 (AGGA), 155–158 (NRRD), Lys-205, 232–235 (CVYN), and Gly-255 each bind NAD(+).

Belongs to the shikimate dehydrogenase family. In terms of assembly, homodimer.

The catalysed reaction is L-quinate + NAD(+) = 3-dehydroquinate + NADH + H(+). It catalyses the reaction L-quinate + NADP(+) = 3-dehydroquinate + NADPH + H(+). It carries out the reaction shikimate + NADP(+) = 3-dehydroshikimate + NADPH + H(+). The enzyme catalyses shikimate + NAD(+) = 3-dehydroshikimate + NADH + H(+). It functions in the pathway metabolic intermediate biosynthesis; chorismate biosynthesis; chorismate from D-erythrose 4-phosphate and phosphoenolpyruvate: step 4/7. Its function is as follows. The actual biological function of YdiB remains unclear, nor is it known whether 3-dehydroshikimate or quinate represents the natural substrate. Catalyzes the reversible NAD-dependent reduction of both 3-dehydroshikimate (DHSA) and 3-dehydroquinate to yield shikimate (SA) and quinate, respectively. It can use both NAD or NADP for catalysis, however it has higher catalytic efficiency with NAD. The polypeptide is Quinate/shikimate dehydrogenase (Escherichia coli O139:H28 (strain E24377A / ETEC)).